We begin with the raw amino-acid sequence, 250 residues long: Histone H1.1 (250 aa).

A compositionally biased stretch (polar residues) spans 1 to 11 (MSDSAVATSAS). Disordered stretches follow at residues 1–52 (MSDS…QQMV) and 104–250 (QTKG…ATKK). The 75-residue stretch at 44 to 118 (SHPPTQQMVD…GASGSFKLSA (75 aa)) folds into the H15 domain. Residues 122 to 133 (KDAKPKASAVEK) are compositionally biased toward basic and acidic residues. Residues 140 to 161 (ASAARATKSKSSTSTTKKAAGA) are compositionally biased toward low complexity. Positions 174 to 191 (KNVEKKKADKEKAKDAKK) are enriched in basic and acidic residues. Residues 192-234 (TGTIKAKPTTAKAKSSATKPKTPKPKTTSAKPKKVVSATTPKK) are compositionally biased toward low complexity. The span at 235–250 (TAVKKPKAKTASATKK) shows a compositional bias: basic residues.

Belongs to the histone H1/H5 family.

The protein resides in the nucleus. It is found in the chromosome. Histones H1 are necessary for the condensation of nucleosome chains into higher-order structures. This chain is Histone H1.1 (His1.1), found in Drosophila virilis (Fruit fly).